The sequence spans 174 residues: FMN reductase (NADH) RutF (174 aa).

It belongs to the non-flavoprotein flavin reductase family. RutF subfamily.

It catalyses the reaction FMNH2 + NAD(+) = FMN + NADH + 2 H(+). Catalyzes the reduction of FMN to FMNH2 which is used to reduce pyrimidine by RutA via the Rut pathway. The protein is FMN reductase (NADH) RutF of Agrobacterium fabrum (strain C58 / ATCC 33970) (Agrobacterium tumefaciens (strain C58)).